The sequence spans 656 residues: Mucin-20 (656 aa).

Residues 1-21 (MGSVWGLAVPLLVFCWKVGVS) form the signal peptide. Composition is skewed to polar residues over residues 85–96 (ATSISSEVNSRD), 114–125 (PAASSLEAQTTS), and 159–170 (TTSPAPSFLDTQ). 3 disordered regions span residues 85–125 (ATSI…QTTS), 159–232 (TTSP…TQTI), and 329–348 (YLSSESSSSSDSSAGVLSSS). The segment covering 171–227 (TTSPEPSSLTTSPAPSSLITSPTPSSLTTSPAPSFLDTQTTSPAPSSLTTSPAPSSL) has biased composition (low complexity). A run of 5 repeats spans residues 180-188 (TTSPAPSSL), 189-197 (ITSPTPSSL), 198-206 (TTSPAPSFL), 210-218 (TTSPAPSSL), and 219-227 (TTSPAPSSL). Residues 180–227 (TTSPAPSSLITSPTPSSLTTSPAPSFLDTQTTSPAPSSLTTSPAPSSL) form an approximate repeats region. N-linked (GlcNAc...) asparagine glycosylation is found at Asn366 and Asn570. The interval 399-603 (TAALFTSEIL…WIRKTTKHDP (205 aa)) is involved in oligomerization. The segment covering 560-573 (STTASTSKNPNITL) has biased composition (polar residues). Residues 560-592 (STTASTSKNPNITLTKTTASPKPPTHPTTSAST) are disordered. The tract at residues 604–656 (GEDGGFLLVRLTVASPKDLTEHNAREKLMNQLRRELHARMPLVHMSFLSIRRG) is interaction with MET.

Interacts with MET; oligomerization increases affinity for MET. As to expression, highly expressed in kidney. Up-regulated in renal tissues during renal injury.

The protein resides in the secreted. Its subcellular location is the apical cell membrane. It is found in the basolateral cell membrane. The protein localises to the cell projection. It localises to the microvillus membrane. In terms of biological role, may regulate MET signaling cascade. Seems to decrease hepatocyte growth factor (HGF)-induced transient MAPK activation. Blocks GRB2 recruitment to MET thus suppressing the GRB2-RAS pathway. Inhibits HGF-induced proliferation of MMP1 and MMP9 expression. This Mus musculus (Mouse) protein is Mucin-20 (Muc20).